The sequence spans 782 residues: Protein VAC14 homolog (782 aa).

Met-1 carries the N-acetylmethionine modification. HEAT repeat units follow at residues 5–42, 89–126, 171–208, and 212–249; these read KDFAPLTPNIVRALNDKLYEKRKVAALEIEKLVREFVA, LYLKELIEPVLTCFNDADSRLRYYACEALYNIVKVARG, FDLVSFIPLLRERIYSNNQYARQFIISWILVLESVPDI, and DYLPEILDGLFQILGDNGKEIRKMCEVVLGEFLKEIKK. The residue at position 11 (Thr-11) is a Phosphothreonine. Disordered regions lie at residues 335–372 and 471–517; these read EDDELDELRPGQRQAEPTPDDALPKQEGTASGGPDGSC and SSPA…LECS. Residues 438–475 form an HEAT 5 repeat; it reads RHTDSLFPILLQTLSDESDEVILKDLEVLAEIASSPAG. Low complexity predominate over residues 478 to 488; that stretch reads DDPGPLDGPDL. The residue at position 499 (Thr-499) is a Phosphothreonine. The segment covering 506 to 517 has biased composition (polar residues); that stretch reads LNTSGTKGLECS. A Phosphoserine modification is found at Ser-517. One copy of the HEAT 6 repeat lies at 560–598; sequence LNAENIFHSMADILLREEDLKFASTMVHALNTILLTSTE. Phosphoserine is present on Ser-743. The tract at residues 773 to 777 is mediates interaction with the PDZ domain of NOS1; that stretch reads GDHLD.

This sequence belongs to the VAC14 family. In terms of assembly, forms pentamers. Component of the PI(3,5)P2 regulatory complex/PAS complex, at least composed of PIKFYVE, FIG4 and VAC14. VAC14 nucleates the assembly of the complex and serves as a scaffold by pentamerizing into a star-shaped structure, which can bind a single copy each of PIKFYVE and FIG4 and coordinates their activities. Interacts with NOS1. As to quaternary structure, (Microbial infection) Interacts with HTLV-1 Tax. As to expression, ubiquitously expressed.

The protein resides in the endosome membrane. It localises to the microsome membrane. In terms of biological role, scaffold protein component of the PI(3,5)P2 regulatory complex which regulates both the synthesis and turnover of phosphatidylinositol 3,5-bisphosphate (PtdIns(3,5)P2). Pentamerizes into a star-shaped structure and nucleates the assembly of the complex. The pentamer binds a single copy each of PIKFYVE and FIG4 and coordinates both PIKfyve kinase activity and FIG4 phosphatase activity, being required to maintain normal levels of phosphatidylinositol 3-phosphate (PtdIns(3)P) and phosphatidylinositol 5-phosphate (PtdIns(5)P). Plays a role in the biogenesis of endosome carrier vesicles (ECV) / multivesicular bodies (MVB) transport intermediates from early endosomes. In Homo sapiens (Human), this protein is Protein VAC14 homolog (VAC14).